Consider the following 465-residue polypeptide: Poly(A) polymerase I (465 aa).

Catalysis depends on residues Asp80, Asp82, and Asp162. The disordered stretch occupies residues 430–465; that stretch reads APPEQKGMLNELDDDPAPRRRRSRPRKRAPRREGTV. Basic residues predominate over residues 448-459; it reads RRRRSRPRKRAP.

Belongs to the tRNA nucleotidyltransferase/poly(A) polymerase family.

The enzyme catalyses RNA(n) + ATP = RNA(n)-3'-adenine ribonucleotide + diphosphate. Functionally, adds poly(A) tail to the 3' end of many RNAs, which usually targets these RNAs for decay. Plays a significant role in the global control of gene expression, through influencing the rate of transcript degradation, and in the general RNA quality control. This chain is Poly(A) polymerase I, found in Salmonella typhimurium (strain LT2 / SGSC1412 / ATCC 700720).